Consider the following 166-residue polypeptide: MVVKIKGKVFVFGDNVNTDEIIPARYLNTSDPQELAKYCMEDARPGFGRRDDIKGSIIVAGENFGCGSSREHAPVAIKAAGISCVIAKSFARIFFRNAINIGLPIVELKEADEFEEGDIAEVDLENGVVRNLTKGKEYRIRPYPEFLMKIMEAGGWLEYCLKEVGE.

It belongs to the LeuD family. LeuD type 2 subfamily. As to quaternary structure, heterodimer of LeuC and LeuD.

The catalysed reaction is (2R,3S)-3-isopropylmalate = (2S)-2-isopropylmalate. The protein operates within amino-acid biosynthesis; L-leucine biosynthesis; L-leucine from 3-methyl-2-oxobutanoate: step 2/4. Catalyzes the isomerization between 2-isopropylmalate and 3-isopropylmalate, via the formation of 2-isopropylmaleate. In Thermotoga maritima (strain ATCC 43589 / DSM 3109 / JCM 10099 / NBRC 100826 / MSB8), this protein is 3-isopropylmalate dehydratase small subunit 2 (leuD2).